The primary structure comprises 58 residues: U8-ctenitoxin-Pr1a (58 aa).

5 disulfide bridges follow: Cys2/Cys16, Cys9/Cys22, Cys15/Cys40, Cys24/Cys38, and Cys48/Cys55.

In terms of tissue distribution, expressed by the venom gland.

The protein resides in the secreted. Its function is as follows. No toxic effects on mice at dose levels of 5 ug per mouse. May be toxic to insects. This chain is U8-ctenitoxin-Pr1a, found in Phoneutria reidyi (Brazilian Amazonian armed spider).